The primary structure comprises 326 residues: Beta-ketoacyl-[acyl-carrier-protein] synthase III (326 aa).

Residues Cys-120 and His-253 contribute to the active site. The segment at 254–258 (QANIR) is ACP-binding. The active site involves Asn-283.

Belongs to the thiolase-like superfamily. FabH family. Homodimer.

Its subcellular location is the cytoplasm. It catalyses the reaction malonyl-[ACP] + acetyl-CoA + H(+) = 3-oxobutanoyl-[ACP] + CO2 + CoA. It participates in lipid metabolism; fatty acid biosynthesis. Catalyzes the condensation reaction of fatty acid synthesis by the addition to an acyl acceptor of two carbons from malonyl-ACP. Catalyzes the first condensation reaction which initiates fatty acid synthesis and may therefore play a role in governing the total rate of fatty acid production. Possesses both acetoacetyl-ACP synthase and acetyl transacylase activities. Its substrate specificity determines the biosynthesis of branched-chain and/or straight-chain of fatty acids. The sequence is that of Beta-ketoacyl-[acyl-carrier-protein] synthase III from Ralstonia nicotianae (strain ATCC BAA-1114 / GMI1000) (Ralstonia solanacearum).